The following is a 369-amino-acid chain: Anhydro-N-acetylmuramic acid kinase (369 aa).

9-16 contacts ATP; sequence GTSLDAVD.

It belongs to the anhydro-N-acetylmuramic acid kinase family.

It carries out the reaction 1,6-anhydro-N-acetyl-beta-muramate + ATP + H2O = N-acetyl-D-muramate 6-phosphate + ADP + H(+). It functions in the pathway amino-sugar metabolism; 1,6-anhydro-N-acetylmuramate degradation. Its pathway is cell wall biogenesis; peptidoglycan recycling. Catalyzes the specific phosphorylation of 1,6-anhydro-N-acetylmuramic acid (anhMurNAc) with the simultaneous cleavage of the 1,6-anhydro ring, generating MurNAc-6-P. Is required for the utilization of anhMurNAc either imported from the medium or derived from its own cell wall murein, and thus plays a role in cell wall recycling. The protein is Anhydro-N-acetylmuramic acid kinase of Phenylobacterium zucineum (strain HLK1).